Consider the following 117-residue polypeptide: MALETVPKDLRHLRACLLCSLVKTIDQFEYDGCDNCDAYLQMKGNREMVYDCTSSSFDGIIAMMSPGDSWVSKWQRVSNFKPGVYAVSVTGRLPQGIVRELKSRGVAYKSRDTAIKT.

Alanine 2 carries the N-acetylalanine modification. Residues alanine 2 to leucine 40 are interaction with SUPT5H. The Zn(2+) site is built by cysteine 16, cysteine 19, cysteine 33, and cysteine 36. The C4-type zinc-finger motif lies at cysteine 16 to cysteine 36.

It belongs to the SPT4 family. Interacts with SUPT5H to form DSIF. DSIF interacts with the positive transcription elongation factor b complex (P-TEFb complex), which is composed of CDK9 and cyclin-T (CCNT1 or CCNT2). DSIF interacts with RNA polymerase II, and this interaction is reduced by phosphorylation of the C-terminal domain (CTD) of POLR2A by P-TEFb. DSIF also interacts with the NELF complex, which is composed of NELFA, NELFB, NELFD and NELFE, and this interaction occurs following prior binding of DSIF to RNA polymerase II. DSIF also interacts with PRMT1/HRMT1L2, TATSF1, RNGTT/CAP1A, PRMT5/SKB1, SUPT6H, and can interact with PIN1. Ubiquitinated by UBR5 when not assembled in the DSIF complex, leading to its degradation: UBR5 recognizes and binds a degron that is not accessible when SUPT4H1 is part of the DSIF complex.

The protein resides in the nucleus. Its function is as follows. Component of the DRB sensitivity-inducing factor complex (DSIF complex), which regulates mRNA processing and transcription elongation by RNA polymerase II. DSIF positively regulates mRNA capping by stimulating the mRNA guanylyltransferase activity of RNGTT/CAP1A. DSIF also acts cooperatively with the negative elongation factor complex (NELF complex) to enhance transcriptional pausing at sites proximal to the promoter. Transcriptional pausing may facilitate the assembly of an elongation competent RNA polymerase II complex. DSIF and NELF promote pausing by inhibition of the transcription elongation factor TFIIS/S-II. TFIIS/S-II binds to RNA polymerase II at transcription pause sites and stimulates the weak intrinsic nuclease activity of the enzyme. Cleavage of blocked transcripts by RNA polymerase II promotes the resumption of transcription from the new 3' terminus and may allow repeated attempts at transcription through natural pause sites. This chain is Transcription elongation factor SPT4 (SUPT4H1), found in Pongo abelii (Sumatran orangutan).